The following is a 628-amino-acid chain: Crossover junction endonuclease MUS81 (628 aa).

The segment covering Ser-298–Ile-310 has biased composition (polar residues). The tract at residues Ser-298–Ser-318 is disordered. One can recognise an ERCC4 domain in the interval Tyr-348–Ile-445.

Belongs to the XPF family. Interacts with EME1. Requires Mg(2+) as cofactor.

Its subcellular location is the nucleus. Interacts with EME1 to form a DNA structure-specific endonuclease with substrate preference for branched DNA structures with a 5'-end at the branch nick. Typical substrates include 3'-flap structures, D-loops, replication forks and nicked Holliday junctions. May be required in mitosis for the processing of stalled or collapsed replication fork intermediates. May be required in meiosis for the repair of meiosis-specific double strand breaks subsequent to single-end invasion (SEI). The protein is Crossover junction endonuclease MUS81 (MUS81) of Candida glabrata (strain ATCC 2001 / BCRC 20586 / JCM 3761 / NBRC 0622 / NRRL Y-65 / CBS 138) (Yeast).